Here is a 225-residue protein sequence, read N- to C-terminus: Cyanamide hydratase DDI2 (225 aa).

Positions 52–162 constitute an HD domain; sequence VLNHSLRVFQ…LQIATTLDNV (111 aa).

This sequence belongs to the cyanamide dehydrase family. As to quaternary structure, homohexamer. Requires Zn(2+) as cofactor.

It carries out the reaction urea = cyanamide + H2O. Its function is as follows. Cyanamide hydratase involved in the detoxification and/or utilization of cyanamide, a toxic nitrile compound distributed widely in the environment. The sequence is that of Cyanamide hydratase DDI2 from Saccharomyces cerevisiae (strain ATCC 204508 / S288c) (Baker's yeast).